The following is a 105-amino-acid chain: Large ribosomal subunit protein uL23 (105 aa).

The protein belongs to the universal ribosomal protein uL23 family. As to quaternary structure, part of the 50S ribosomal subunit. Contacts protein L29, and trigger factor when it is bound to the ribosome.

One of the early assembly proteins it binds 23S rRNA. One of the proteins that surrounds the polypeptide exit tunnel on the outside of the ribosome. Forms the main docking site for trigger factor binding to the ribosome. The chain is Large ribosomal subunit protein uL23 from Janthinobacterium sp. (strain Marseille) (Minibacterium massiliensis).